A 320-amino-acid polypeptide reads, in one-letter code: Acetyl-coenzyme A carboxylase carboxyl transferase subunit alpha (320 aa).

A CoA carboxyltransferase C-terminal domain is found at 42-295; that stretch reads IEEKAVQALN…GDAIAAAFAE (254 aa).

This sequence belongs to the AccA family. As to quaternary structure, acetyl-CoA carboxylase is a heterohexamer composed of biotin carboxyl carrier protein (AccB), biotin carboxylase (AccC) and two subunits each of ACCase subunit alpha (AccA) and ACCase subunit beta (AccD).

Its subcellular location is the cytoplasm. It catalyses the reaction N(6)-carboxybiotinyl-L-lysyl-[protein] + acetyl-CoA = N(6)-biotinyl-L-lysyl-[protein] + malonyl-CoA. Its pathway is lipid metabolism; malonyl-CoA biosynthesis; malonyl-CoA from acetyl-CoA: step 1/1. In terms of biological role, component of the acetyl coenzyme A carboxylase (ACC) complex. First, biotin carboxylase catalyzes the carboxylation of biotin on its carrier protein (BCCP) and then the CO(2) group is transferred by the carboxyltransferase to acetyl-CoA to form malonyl-CoA. This Rhodopseudomonas palustris (strain HaA2) protein is Acetyl-coenzyme A carboxylase carboxyl transferase subunit alpha.